The sequence spans 773 residues: Beta-D-xylosidase 3 (773 aa).

The signal sequence occupies residues 1 to 23 (MASRNRALFSVSTLFLCFIVCIS). The N-linked (GlcNAc...) asparagine glycan is linked to N131. Residue D298 is part of the active site. Residues N349, N432, and N770 are each glycosylated (N-linked (GlcNAc...) asparagine).

It belongs to the glycosyl hydrolase 3 family. Expressed in flowers and siliques, in the early stage of seed formation and not at seed maturation. Detected exclusively in the endosperm of very young seeds when the embryo is at the globular stage.

Its subcellular location is the secreted. It localises to the extracellular space. The protein resides in the extracellular matrix. The enzyme catalyses Hydrolysis of terminal non-reducing alpha-L-arabinofuranoside residues in alpha-L-arabinosides.. Involved in the hydrolysis of arabinan. Can hydrolyze (1,3)-alpha-, (1,2)-alpha-linked side group residues and non-reducing terminal L-arabinofuranose residues of debranched (1,5)-alpha-L-arabinan backbone. Also acts as a beta-D-xylosidase, releasing D-xylose from arabinoxylan and xylan. In Arabidopsis thaliana (Mouse-ear cress), this protein is Beta-D-xylosidase 3 (BXL3).